The chain runs to 159 residues: Transcription elongation factor GreA (159 aa).

This sequence belongs to the GreA/GreB family.

Functionally, necessary for efficient RNA polymerase transcription elongation past template-encoded arresting sites. The arresting sites in DNA have the property of trapping a certain fraction of elongating RNA polymerases that pass through, resulting in locked ternary complexes. Cleavage of the nascent transcript by cleavage factors such as GreA or GreB allows the resumption of elongation from the new 3'terminus. GreA releases sequences of 2 to 3 nucleotides. This Buchnera aphidicola subsp. Baizongia pistaciae (strain Bp) protein is Transcription elongation factor GreA.